The chain runs to 158 residues: Transcription elongation factor GreA (158 aa).

This sequence belongs to the GreA/GreB family.

Necessary for efficient RNA polymerase transcription elongation past template-encoded arresting sites. The arresting sites in DNA have the property of trapping a certain fraction of elongating RNA polymerases that pass through, resulting in locked ternary complexes. Cleavage of the nascent transcript by cleavage factors such as GreA or GreB allows the resumption of elongation from the new 3'terminus. GreA releases sequences of 2 to 3 nucleotides. This is Transcription elongation factor GreA from Pseudomonas syringae pv. tomato (strain ATCC BAA-871 / DC3000).